An 857-amino-acid chain; its full sequence is Catalase-peroxidase (857 aa).

Positions tryptophan 207–tyrosine 330 form a cross-link, tryptophyl-tyrosyl-methioninium (Trp-Tyr) (with M-356). Histidine 208 (proton acceptor) is an active-site residue. Positions tyrosine 330–methionine 356 form a cross-link, tryptophyl-tyrosyl-methioninium (Tyr-Met) (with W-207). Histidine 371 serves as a coordination point for heme b.

The protein belongs to the peroxidase family. Peroxidase/catalase subfamily. As to quaternary structure, homodimer or homotetramer. It depends on heme b as a cofactor. Formation of the three residue Trp-Tyr-Met cross-link is important for the catalase, but not the peroxidase activity of the enzyme.

It carries out the reaction H2O2 + AH2 = A + 2 H2O. The enzyme catalyses 2 H2O2 = O2 + 2 H2O. Functionally, bifunctional enzyme with both catalase and broad-spectrum peroxidase activity. This chain is Catalase-peroxidase, found in Rhodopirellula baltica (strain DSM 10527 / NCIMB 13988 / SH1).